The sequence spans 759 residues: Subtilisin-like protease SBT3.16 (759 aa).

An N-terminal signal peptide occupies residues 1-33; sequence MELSSLIVPNNKKHFVVVFIGLVLIFKIALITA. A propeptide spans 34–119 (activation peptide); that stretch reads ANEKSQIYTV…VTRSKNMKLK (86 aa). In terms of domain architecture, Inhibitor I9 spans 41-118; sequence YTVHLGERQH…RVTRSKNMKL (78 aa). The Peptidase S8 domain maps to 124 to 608; it reads SDYLGLTSAA…GGLVNPVKVA (485 aa). The Charge relay system role is filled by aspartate 153. Residues asparagine 186 and asparagine 209 are each glycosylated (N-linked (GlcNAc...) asparagine). The active-site Charge relay system is histidine 229. The N-linked (GlcNAc...) asparagine glycan is linked to asparagine 371. Serine 539 functions as the Charge relay system in the catalytic mechanism. 2 N-linked (GlcNAc...) asparagine glycosylation sites follow: asparagine 632 and asparagine 711.

The protein belongs to the peptidase S8 family.

It localises to the secreted. The chain is Subtilisin-like protease SBT3.16 from Arabidopsis thaliana (Mouse-ear cress).